Here is a 945-residue protein sequence, read N- to C-terminus: MSDKQTPENAVDYKATLNLPGTEFAMKANLAVREVKWLEEWYADNIYQKIRASRIGKKKYVLHDGPPYANGQIHLGHAVNKVLKDIIVKSRVMDGFDAPYVPGWDCHGLPIELKVEEKVGKVGVKVDASTFRKACREYALSQVDLQRKDFIRMGVFGDWQDPYLTMNFKQEADIVRSLGEIQKAGHIEPGLKPVNWCIDCGSALAEAEVEYEDKKSDAIDVGFGVVDLNDLSARLNVEVQDPTDIVIWTTTPWTLPANQAVALHAEIDYQLVQVQSDRGTQNFILAKDLVESAIARYKLENPVVLADFKGAVLELLQLQHPLLADRQVPVILGEHVIATSGTGAVHTAPGHGTDDYKVGLIYNLKVDNPVGGNGVYLPTAPIFSGEHIYKANPQIIEALGATGRLWAHQPIVHSYPHCWRHKTPIIFRATPQWFISMDAKGLRECALNAIENDISFVPDWGKNRIESMIEGRPDWCISRQRTWGVPIPFFVHKDTNELHPRTPELIEEVAQLIEHEGIDAWFNREAKDFIGADAEHYNAVRDTLDVWFDSGTTHYAVLRQREELTDPADLYLEGSDQHRGWFQSSLLTSIAINERAPYKGLLTHGFVVDEKGRKMSKSLGNIITPQDIIKDMGADGLRFWIASSDYRYEMTAGKEIFSRASDGYRRIRNTLRFLLANLNGFTPSTDALPVDQLIALDQYILQRAAEVQKTVQQAYEDMNFHIVCSALTNFCINDLGGFYLDIIKDRQYTTKADSAARHSAQTALYHLVQAFVRWMSPILSFTAQEAWPLIPEQTEQYVFTTEWYDIPVASTANLISEADWQTLISVKSAVNKQIEAARNAKLVGSNLSAKVEIWAKDELQSVLNQLGDELRFVLITSQVNVYPYAEQGESTEMDGLRVQISAAEGEKCVRCWHVLPDVNTHADHPGLCGRCIINVTGSGEVRKYA.

A 'HIGH' region motif is present at residues 67-77; the sequence is PYANGQIHLGH. Residue Glu-573 coordinates L-isoleucyl-5'-AMP. The 'KMSKS' region signature appears at 614–618; it reads KMSKS. ATP is bound at residue Lys-617. Zn(2+) is bound by residues Cys-908, Cys-911, Cys-928, and Cys-931.

Belongs to the class-I aminoacyl-tRNA synthetase family. IleS type 1 subfamily. Monomer. It depends on Zn(2+) as a cofactor.

Its subcellular location is the cytoplasm. It carries out the reaction tRNA(Ile) + L-isoleucine + ATP = L-isoleucyl-tRNA(Ile) + AMP + diphosphate. Functionally, catalyzes the attachment of isoleucine to tRNA(Ile). As IleRS can inadvertently accommodate and process structurally similar amino acids such as valine, to avoid such errors it has two additional distinct tRNA(Ile)-dependent editing activities. One activity is designated as 'pretransfer' editing and involves the hydrolysis of activated Val-AMP. The other activity is designated 'posttransfer' editing and involves deacylation of mischarged Val-tRNA(Ile). The protein is Isoleucine--tRNA ligase of Acinetobacter baylyi (strain ATCC 33305 / BD413 / ADP1).